The following is a 558-amino-acid chain: Urocanate hydratase (558 aa).

Residues Gly54–Gly55, Gln132, Gly178–Gly180, Glu198, Asn244–Ala245, Gln265–His269, Tyr275–Leu276, and Tyr324 each bind NAD(+). The active site involves Cys412. Gly494 contacts NAD(+).

It belongs to the urocanase family. The cofactor is NAD(+).

It localises to the cytoplasm. It carries out the reaction 4-imidazolone-5-propanoate = trans-urocanate + H2O. It functions in the pathway amino-acid degradation; L-histidine degradation into L-glutamate; N-formimidoyl-L-glutamate from L-histidine: step 2/3. Functionally, catalyzes the conversion of urocanate to 4-imidazolone-5-propionate. The chain is Urocanate hydratase from Acinetobacter baumannii (strain ACICU).